A 150-amino-acid polypeptide reads, in one-letter code: Large ribosomal subunit protein uL15 (150 aa).

Residues 1–15 (MNLSNLQPAEGSTHN) are compositionally biased toward polar residues. Positions 1 to 53 (MNLSNLQPAEGSTHNQNKRVGRGEGSGKGGTAARGHKGAKSRSGYSKKIGFEG) are disordered. Positions 23–32 (GEGSGKGGTA) are enriched in gly residues.

The protein belongs to the universal ribosomal protein uL15 family. As to quaternary structure, part of the 50S ribosomal subunit.

Its function is as follows. Binds to the 23S rRNA. The protein is Large ribosomal subunit protein uL15 of Flavobacterium johnsoniae (strain ATCC 17061 / DSM 2064 / JCM 8514 / BCRC 14874 / CCUG 350202 / NBRC 14942 / NCIMB 11054 / UW101) (Cytophaga johnsonae).